The following is a 119-amino-acid chain: Phosphoribosyl-AMP cyclohydrolase (119 aa).

Aspartate 77 is a binding site for Mg(2+). Cysteine 78 contacts Zn(2+). The Mg(2+) site is built by aspartate 79 and aspartate 81. Zn(2+) is bound by residues cysteine 94 and cysteine 101.

This sequence belongs to the PRA-CH family. In terms of assembly, homodimer. Mg(2+) is required as a cofactor. The cofactor is Zn(2+).

The protein localises to the cytoplasm. It catalyses the reaction 1-(5-phospho-beta-D-ribosyl)-5'-AMP + H2O = 1-(5-phospho-beta-D-ribosyl)-5-[(5-phospho-beta-D-ribosylamino)methylideneamino]imidazole-4-carboxamide. It participates in amino-acid biosynthesis; L-histidine biosynthesis; L-histidine from 5-phospho-alpha-D-ribose 1-diphosphate: step 3/9. Catalyzes the hydrolysis of the adenine ring of phosphoribosyl-AMP. The sequence is that of Phosphoribosyl-AMP cyclohydrolase from Dinoroseobacter shibae (strain DSM 16493 / NCIMB 14021 / DFL 12).